The following is a 140-amino-acid chain: Putative septation protein SpoVG (140 aa).

Residues 88–127 are disordered; that stretch reads VAPQAGGLQGAEEPTAVEPAPQLQDESELPWEPGDDGEGA. Residues 112 to 124 are compositionally biased toward acidic residues; that stretch reads DESELPWEPGDDG.

This sequence belongs to the SpoVG family.

Its function is as follows. Could be involved in septation. The chain is Putative septation protein SpoVG from Symbiobacterium thermophilum (strain DSM 24528 / JCM 14929 / IAM 14863 / T).